A 286-amino-acid chain; its full sequence is Simplagrin (286 aa).

Positions 1–20 (MKKFCLIFLLLALTALHVKG) are cleaved as a signal peptide. Residues 17-179 (HVKGSPIPDE…GSSSGGEESA (163 aa)) are disordered. Composition is skewed to acidic residues over residues 24-69 (PDEE…DGQE) and 103-129 (VESG…TGGE). N-linked (GlcNAc...) asparagine glycosylation is present at N116. A compositionally biased stretch (low complexity) spans 166–177 (SNRAGSSSGGEE).

This sequence belongs to the aegyptin family. As to quaternary structure, monomeric in solution; likely has an elongated non-globular form. Interacts with human and rat collagens (via a RGQOGVMGF peptide, where O is hydroxyproline). Post-translationally, not glycosylated. As to expression, salivary gland.

It is found in the secreted. Its function is as follows. Inhibits host platelet aggregation induced by low concentrations of collagen via blocking the von Willebrand Factor (VWF) interaction with collagen. The sequence is that of Simplagrin from Simulium nigrimanum (Black fly).